Here is a 557-residue protein sequence, read N- to C-terminus: Aspartate--tRNA ligase (557 aa).

L-aspartate is bound at residue Glu168. Residues 192 to 195 (QIYK) form an aspartate region. An L-aspartate-binding site is contributed by Arg214. Residues 214 to 216 (RDE) and Gln223 each bind ATP. His423 lines the L-aspartate pocket. Residue Glu457 coordinates ATP. An L-aspartate-binding site is contributed by Arg464. 505-508 (GLDR) contributes to the ATP binding site.

The protein belongs to the class-II aminoacyl-tRNA synthetase family. Type 1 subfamily. Homodimer.

The protein localises to the cytoplasm. The catalysed reaction is tRNA(Asp) + L-aspartate + ATP = L-aspartyl-tRNA(Asp) + AMP + diphosphate. Its function is as follows. Catalyzes the attachment of L-aspartate to tRNA(Asp) in a two-step reaction: L-aspartate is first activated by ATP to form Asp-AMP and then transferred to the acceptor end of tRNA(Asp). The protein is Aspartate--tRNA ligase of Mycoplasma pneumoniae (strain ATCC 29342 / M129 / Subtype 1) (Mycoplasmoides pneumoniae).